The primary structure comprises 1102 residues: DNA-directed RNA polymerase subunit beta (1102 aa).

The tract at residues 1076-1102 (IDSQRRAPNRPTYESLHTEEDLEEEEV) is disordered.

This sequence belongs to the RNA polymerase beta chain family. In terms of assembly, in cyanobacteria the RNAP catalytic core is composed of 2 alpha, 1 beta, 1 beta', 1 gamma and 1 omega subunit. When a sigma factor is associated with the core the holoenzyme is formed, which can initiate transcription.

The enzyme catalyses RNA(n) + a ribonucleoside 5'-triphosphate = RNA(n+1) + diphosphate. Its function is as follows. DNA-dependent RNA polymerase catalyzes the transcription of DNA into RNA using the four ribonucleoside triphosphates as substrates. The sequence is that of DNA-directed RNA polymerase subunit beta from Synechocystis sp. (strain ATCC 27184 / PCC 6803 / Kazusa).